A 745-amino-acid polypeptide reads, in one-letter code: Photosystem I P700 chlorophyll a apoprotein A2 (745 aa).

A run of 8 helical transmembrane segments spans residues 49 to 72 (LFAT…FHIA), 138 to 161 (LYAG…LHLQ), 178 to 202 (LNHH…HVAI), 276 to 294 (MAHH…GHMY), 338 to 361 (LHFQ…QHMY), 377 to 403 (AALY…IFLV), 425 to 447 (AIIS…LYVH), and 528 to 546 (FLVH…LILV). 2 residues coordinate [4Fe-4S] cluster: Cys-570 and Cys-579. The next 2 helical transmembrane spans lie at 586–607 (AFYL…YWHW) and 654–676 (LAVW…MFLI). Chlorophyll a contacts are provided by His-665, Met-673, and Tyr-681. Trp-682 contributes to the phylloquinone binding site. The helical transmembrane segment at 718–738 (LVGLAHFTVGYVLTYAAFVIA) threads the bilayer.

Belongs to the PsaA/PsaB family. In terms of assembly, the PsaA/B heterodimer binds the P700 chlorophyll special pair and subsequent electron acceptors. PSI consists of a core antenna complex that captures photons, and an electron transfer chain that converts photonic excitation into a charge separation. The cyanobacterial PSI reaction center is composed of one copy each of PsaA,B,C,D,E,F,I,J,K,L,M and X, and forms trimeric complexes. It depends on PSI electron transfer chain: 5 chlorophyll a, 1 chlorophyll a', 2 phylloquinones and 3 4Fe-4S clusters. PSI core antenna: 90 chlorophyll a, 22 carotenoids, 3 phospholipids and 1 galactolipid. P700 is a chlorophyll a/chlorophyll a' dimer, A0 is one or more chlorophyll a, A1 is one or both phylloquinones and FX is a shared 4Fe-4S iron-sulfur center. as a cofactor.

It localises to the cellular thylakoid membrane. It catalyses the reaction reduced [plastocyanin] + hnu + oxidized [2Fe-2S]-[ferredoxin] = oxidized [plastocyanin] + reduced [2Fe-2S]-[ferredoxin]. Its function is as follows. PsaA and PsaB bind P700, the primary electron donor of photosystem I (PSI), as well as the electron acceptors A0, A1 and FX. PSI is a plastocyanin/cytochrome c6-ferredoxin oxidoreductase, converting photonic excitation into a charge separation, which transfers an electron from the donor P700 chlorophyll pair to the spectroscopically characterized acceptors A0, A1, FX, FA and FB in turn. Oxidized P700 is reduced on the lumenal side of the thylakoid membrane by plastocyanin or cytochrome c6. The sequence is that of Photosystem I P700 chlorophyll a apoprotein A2 from Synechococcus sp. (strain JA-3-3Ab) (Cyanobacteria bacterium Yellowstone A-Prime).